We begin with the raw amino-acid sequence, 148 residues long: Fibroblast growth factor 1 (148 aa).

The propeptide occupies 1 to 11 (EITTFAALTER). N29 provides a ligand contact to heparin. Positions 123 to 139 (KKNGKTKLGSRTHFGQK) are heparin-binding.

This sequence belongs to the heparin-binding growth factors family.

The protein localises to the secreted. The protein resides in the cytoplasm. It is found in the cell cortex. Its subcellular location is the cytosol. It localises to the nucleus. Its function is as follows. Plays an important role in the regulation of cell survival, cell division, angiogenesis, cell differentiation and cell migration. Functions as a potent mitogen in vitro. Acts as a ligand for FGFR1 and integrins. Binds to FGFR1 in the presence of heparin leading to FGFR1 dimerization and activation via sequential autophosphorylation on tyrosine residues which act as docking sites for interacting proteins, leading to the activation of several signaling cascades. Binds to integrins. Its binding to integrins and subsequent ternary complex formation with integrins and FGFR1 are essential for FGF1 signaling. This is Fibroblast growth factor 1 (fgf1) from Cynops pyrrhogaster (Japanese fire-bellied newt).